The sequence spans 1024 residues: Error-prone DNA polymerase (1024 aa).

Belongs to the DNA polymerase type-C family. DnaE2 subfamily.

The protein localises to the cytoplasm. It carries out the reaction DNA(n) + a 2'-deoxyribonucleoside 5'-triphosphate = DNA(n+1) + diphosphate. Its function is as follows. DNA polymerase involved in damage-induced mutagenesis and translesion synthesis (TLS). It is not the major replicative DNA polymerase. The sequence is that of Error-prone DNA polymerase from Vibrio vulnificus (strain CMCP6).